The following is a 678-amino-acid chain: UvrABC system protein C (678 aa).

A compositionally biased stretch (basic residues) spans 1 to 13; it reads MKKNISYGKHKTF. The disordered stretch occupies residues 1–25; it reads MKKNISYGKHKTFPSKLNGLEKQHS. The GIY-YIG domain maps to 69–147; sequence HKPGVYRMFD…IKRLHPRFNV (79 aa). In terms of domain architecture, UVR spans 257-292; that stretch reads QSVKNDMIQAMHKAAEDLDFEQAAVYRDRLSALSHI.

This sequence belongs to the UvrC family. In terms of assembly, interacts with UvrB in an incision complex.

The protein localises to the cytoplasm. The UvrABC repair system catalyzes the recognition and processing of DNA lesions. UvrC both incises the 5' and 3' sides of the lesion. The N-terminal half is responsible for the 3' incision and the C-terminal half is responsible for the 5' incision. The sequence is that of UvrABC system protein C from Bartonella quintana (strain Toulouse) (Rochalimaea quintana).